Consider the following 81-residue polypeptide: MSFLISLIVAIIIGWLGSLFVKGDMPGGIIGSMIAGLIGAWIGHGLLGTWGPHLAGFAIIPAVIGAAIVVFLVSLLTRKRG.

3 helical membrane-spanning segments follow: residues Met1–Val21, Gly27–Leu47, and Gly56–Leu76.

The protein belongs to the UPF0410 family.

It is found in the cell membrane. The protein is UPF0410 protein YwzA (ywzA) of Bacillus subtilis (strain 168).